A 312-amino-acid chain; its full sequence is 4-diphosphocytidyl-2-C-methyl-D-erythritol kinase (312 aa).

The active site involves K16. 101-111 (PIGAGLAGGSS) is an ATP binding site. D143 is an active-site residue.

It belongs to the GHMP kinase family. IspE subfamily.

The catalysed reaction is 4-CDP-2-C-methyl-D-erythritol + ATP = 4-CDP-2-C-methyl-D-erythritol 2-phosphate + ADP + H(+). It functions in the pathway isoprenoid biosynthesis; isopentenyl diphosphate biosynthesis via DXP pathway; isopentenyl diphosphate from 1-deoxy-D-xylulose 5-phosphate: step 3/6. Catalyzes the phosphorylation of the position 2 hydroxy group of 4-diphosphocytidyl-2C-methyl-D-erythritol. This Prochlorococcus marinus subsp. pastoris (strain CCMP1986 / NIES-2087 / MED4) protein is 4-diphosphocytidyl-2-C-methyl-D-erythritol kinase.